We begin with the raw amino-acid sequence, 246 residues long: Probable transcriptional regulatory protein YebC (246 aa).

The interval 1–20 (MAGHSKWANTRHRKAAQDAK) is disordered.

This sequence belongs to the TACO1 family.

It localises to the cytoplasm. In Shigella boydii serotype 4 (strain Sb227), this protein is Probable transcriptional regulatory protein YebC.